The sequence spans 535 residues: CTP synthase (535 aa).

Residues 1–267 (MTKYIFVTGG…DQIVCDHLKL (267 aa)) form an amidoligase domain region. Position 13 (Ser13) interacts with CTP. Ser13 provides a ligand contact to UTP. 14 to 19 (SLGKGI) provides a ligand contact to ATP. L-glutamine is bound at residue Tyr54. ATP is bound at residue Asp71. Positions 71 and 141 each coordinate Mg(2+). CTP is bound by residues 148-150 (DIE), 188-193 (KTKPTQ), and Lys224. Residues 188 to 193 (KTKPTQ) and Lys224 each bind UTP. 240–242 (RDA) provides a ligand contact to ATP. The Glutamine amidotransferase type-1 domain maps to 292-534 (KIALVGKYVE…VRASITNKES (243 aa)). Gly354 serves as a coordination point for L-glutamine. Cys381 (nucleophile; for glutamine hydrolysis) is an active-site residue. L-glutamine contacts are provided by residues 382-385 (LGMQ), Glu405, and Arg462. Catalysis depends on residues His507 and Glu509.

Belongs to the CTP synthase family. Homotetramer.

The catalysed reaction is UTP + L-glutamine + ATP + H2O = CTP + L-glutamate + ADP + phosphate + 2 H(+). It carries out the reaction L-glutamine + H2O = L-glutamate + NH4(+). It catalyses the reaction UTP + NH4(+) + ATP = CTP + ADP + phosphate + 2 H(+). The protein operates within pyrimidine metabolism; CTP biosynthesis via de novo pathway; CTP from UDP: step 2/2. Its activity is regulated as follows. Allosterically activated by GTP, when glutamine is the substrate; GTP has no effect on the reaction when ammonia is the substrate. The allosteric effector GTP functions by stabilizing the protein conformation that binds the tetrahedral intermediate(s) formed during glutamine hydrolysis. Inhibited by the product CTP, via allosteric rather than competitive inhibition. Its function is as follows. Catalyzes the ATP-dependent amination of UTP to CTP with either L-glutamine or ammonia as the source of nitrogen. Regulates intracellular CTP levels through interactions with the four ribonucleotide triphosphates. The chain is CTP synthase from Bacillus cereus (strain ATCC 14579 / DSM 31 / CCUG 7414 / JCM 2152 / NBRC 15305 / NCIMB 9373 / NCTC 2599 / NRRL B-3711).